A 722-amino-acid polypeptide reads, in one-letter code: Tegument protein UL46 (722 aa).

The disordered stretch occupies residues 423 to 534 (RLAASGPPGG…AAAARPLAAQ (112 aa)). 2 stretches are compositionally biased toward basic and acidic residues: residues 440 to 451 (CRDKIQRTRRDN) and 474 to 491 (HRED…DRGP). Residues 510–522 (PRLPPRNPAPPEQ) are compositionally biased toward pro residues. Low complexity predominate over residues 523–534 (RPAAAARPLAAQ).

The protein belongs to the herpesviridae HHV-1 VP11/12 protein family. Interacts with VP16. Interacts with host LCK, PIK3R1, SHC1 AND GRB2; these interactions promote the activation of the PI3K/AKT pathway. Interacts with host YWHAB. Interacts with ICP0; this interaction targets UL46 for degradation by the proteasome. In terms of processing, phosphorylated by host LCK. The phosphorylation seems to be lymphocyte-specific.

It is found in the virion tegument. The protein localises to the host cell membrane. Its function is as follows. Plays a role in the activation of the host PI3K/AKT pathway to promote cell survival. Interacts with and activates host LCK and thereby recruits downstream partners SHC1, GRB2 and PI3KR1 in order to activate the PI3K pathway by phosphorylating host AKT on its activating residues. This mechanism is inhibited by the viral protein US3 that instead promotes incorporation of UL46 into virions. The sequence is that of Tegument protein UL46 from Homo sapiens (Human).